The sequence spans 626 residues: Chaperone protein HtpG (626 aa).

The a; substrate-binding stretch occupies residues 1-341 (MAKREFKAES…SEDLSLNISR (341 aa)). The segment at 342 to 552 (EMLQHDRQLK…DGEVTIEMEK (211 aa)) is b. Positions 553-626 (ILNAMPDNQH…FTNDICKVMA (74 aa)) are c.

The protein belongs to the heat shock protein 90 family. Homodimer.

It is found in the cytoplasm. Molecular chaperone. Has ATPase activity. The sequence is that of Chaperone protein HtpG from Bacillus licheniformis (strain ATCC 14580 / DSM 13 / JCM 2505 / CCUG 7422 / NBRC 12200 / NCIMB 9375 / NCTC 10341 / NRRL NRS-1264 / Gibson 46).